The chain runs to 250 residues: UPF0246 protein cce_3295 (250 aa).

This sequence belongs to the UPF0246 family.

This is UPF0246 protein cce_3295 from Crocosphaera subtropica (strain ATCC 51142 / BH68) (Cyanothece sp. (strain ATCC 51142)).